We begin with the raw amino-acid sequence, 446 residues long: MFENDTIVAIATANGIGSISIVRVSGAKALEIATKISKKNNFKARLATLSTIYDSKNEIIDEALVIYFKSPFSFTGEDVVEFQCHGGVAISNMIVDEVLNAGARLANPGEFSKRAFFNNKIDLTKAEAISKIIEARSADAVKLLARQLKGELTNFVDEIREDLLFMLAYTEVSIDYAEEDLPTDIYEQIENKMQKISLKLSNTLEASRRREGMIEGFKVAIIGKPNVGKSSLLNKLLNFDRAIISDIAGTTRDTIEESVRIGTHIIKIVDTAGIRDASDVIEKIGIEKSIQAINEADIVIALFDNSKICDDEDKKILDLIKENSDKKVIVVLNKSDLQNQFDKNVLDSFIELSTKEDINPLIKELELILDSNTFGDDITLVSKRQVLAVENTLYNIGLAKEPLKSGELEFFAHFITQALEDISSITRPYDNDEMLDVMFGEFCLGK.

(6S)-5-formyl-5,6,7,8-tetrahydrofolate contacts are provided by Arg23, Glu81, and Lys120. Positions 216–370 (GFKVAIIGKP…LIKELELILD (155 aa)) constitute a TrmE-type G domain. Asn226 contributes to the K(+) binding site. GTP-binding positions include 226–231 (NVGKSS), 245–251 (SDIAGTT), and 270–273 (DTAG). Residue Ser230 participates in Mg(2+) binding. Ser245, Ile247, and Thr250 together coordinate K(+). Position 251 (Thr251) interacts with Mg(2+). Lys446 provides a ligand contact to (6S)-5-formyl-5,6,7,8-tetrahydrofolate.

Belongs to the TRAFAC class TrmE-Era-EngA-EngB-Septin-like GTPase superfamily. TrmE GTPase family. As to quaternary structure, homodimer. Heterotetramer of two MnmE and two MnmG subunits. It depends on K(+) as a cofactor.

It is found in the cytoplasm. Exhibits a very high intrinsic GTPase hydrolysis rate. Involved in the addition of a carboxymethylaminomethyl (cmnm) group at the wobble position (U34) of certain tRNAs, forming tRNA-cmnm(5)s(2)U34. The protein is tRNA modification GTPase MnmE of Aliarcobacter butzleri (strain RM4018) (Arcobacter butzleri).